Reading from the N-terminus, the 337-residue chain is Probable cytosolic iron-sulfur protein assembly protein Ciao1 (337 aa).

7 WD repeats span residues Gly12–Ala51, Gly58–Asn97, Gly102–Cys141, Thr147–Ser186, Ser193–Gly232, Tyr251–Glu290, and Ala301–Glu337.

The protein belongs to the WD repeat CIA1 family.

Essential component of the cytosolic iron-sulfur (Fe/S) protein assembly machinery. Required for the maturation of extramitochondrial Fe/S proteins. The polypeptide is Probable cytosolic iron-sulfur protein assembly protein Ciao1 (Aedes aegypti (Yellowfever mosquito)).